Reading from the N-terminus, the 91-residue chain is UPF0250 protein PP_4802 (91 aa).

The protein belongs to the UPF0250 family.

This Pseudomonas putida (strain ATCC 47054 / DSM 6125 / CFBP 8728 / NCIMB 11950 / KT2440) protein is UPF0250 protein PP_4802.